Here is a 179-residue protein sequence, read N- to C-terminus: Inner membrane-spanning protein YciB (179 aa).

5 helical membrane-spanning segments follow: residues 22-42 (IYVASGALIVATALALVFTWF), 50-70 (MTLITFLMVLVFGTLTLVFHN), 76-96 (WKVTIIYTLFALALLISQLVL), 121-141 (LAWAVFFLVCGLANIYVAFWL), and 149-169 (FKVFGLTALTLVFTLLSGVYI).

This sequence belongs to the YciB family.

The protein localises to the cell inner membrane. Functionally, plays a role in cell envelope biogenesis, maintenance of cell envelope integrity and membrane homeostasis. The sequence is that of Inner membrane-spanning protein YciB from Serratia proteamaculans (strain 568).